The sequence spans 86 residues: Exopolysaccharide production repressor protein (86 aa).

The helical transmembrane segment at 18–38 (FAVTLAASVFLQVVYFLSLLF) threads the bilayer. The interval 44-86 (TRESDRSIHSGTRQADQPQKRDRDKTEQSNVPKLDPRRKRRTP) is disordered. The span at 61–70 (PQKRDRDKTE) shows a compositional bias: basic and acidic residues.

The protein localises to the cell membrane. The protein operates within glycan metabolism; exopolysaccharide biosynthesis. Its function is as follows. Inhibition of exopolysaccharide synthesis (EPS) and nodulation ability (NOD). The sequence is that of Exopolysaccharide production repressor protein (exoX) from Rhizobium leguminosarum bv. phaseoli.